The primary structure comprises 678 residues: MRSPLLASLFALALSIASSEAAISSTEQVPLSGSVPQLDHSELQNVRINKKRPLKGRFLHITDIHPDPHYKTGSTFDSGCHRKPKKDGKSEGKKATENERGNEDLDDKEFDTLIKNEDLAGKWGTAVSDCDCPMSLVNITFDWLKEEWANEVDFVVWTGDNARHDIDRRIPRTPKEIFDSNRMIVDRMLDAFGRDMPIVPSIGNNDIYPHNVLAAGPSRITEEFLLIWKHFIPSEAAHVFERGAYFSVEVIPDRLAVISLNTLFWYDANTLVDGCRDHSNDPGALEMDWLEVQLNNFRQRGMQVWLTGHVPPHMNHYYDNCYLRYGDLALRYQDTIVGHLFGHMNVDHFFFIDVDELEATSELTSTSSNTTLSDLPLLHGPRLPRPGPGKYTAMGRSGARKLEEELRKDFGQMPGPGILKLKDYAVMNVAPSVIPTYYPGIRIFSYNISDEEDSFDQGHSYQGADELLDDEDEGDELEELELPSDNGFFGGLDERENEDIEILKGSGGHRHDVPKGDCSLPSNEDKPHCTFKRKPRHYSKRSPSRTNRALSPLGYTQFYLPSMMKQKKRPKWEVEYTTYKVKTLVPSSPENTTQPLPVPLHLLPRYDPSIFSKPKNKTEEKEVAKKTAKFYKAVKAVTPYRMKDLTIGSWVKLARMLVLEKKRWKKFAELMLVSTETD.

The Cytoplasmic segment spans residues 1–2 (MR). Residues 3 to 23 (SPLLASLFALALSIASSEAAI) form a helical; Signal-anchor for type II membrane protein membrane-spanning segment. Over 24–678 (SSTEQVPLSG…ELMLVSTETD (655 aa)) the chain is Vacuolar. The interval 70 to 109 (YKTGSTFDSGCHRKPKKDGKSEGKKATENERGNEDLDDKE) is disordered. The span at 87–103 (DGKSEGKKATENERGNE) shows a compositional bias: basic and acidic residues. Residues asparagine 138, asparagine 369, and asparagine 447 are each glycosylated (N-linked (GlcNAc...) asparagine). The segment at 504 to 547 (KGSGGHRHDVPKGDCSLPSNEDKPHCTFKRKPRHYSKRSPSRTN) is disordered. The segment covering 529–543 (CTFKRKPRHYSKRSP) has biased composition (basic residues). N-linked (GlcNAc...) asparagine glycosylation is found at asparagine 591 and asparagine 616.

Belongs to the endopolyphosphatase PPN1 family. The cofactor is a divalent metal cation. In terms of processing, processing by proteases in the vacuole may be required for activation.

The protein localises to the vacuole membrane. The enzyme catalyses [phosphate](n+1) + n H2O = (n+1) phosphate + n H(+). Its function is as follows. Catalyzes the hydrolysis of inorganic polyphosphate (polyP) chains of many hundreds of phosphate residues into shorter lengths. In Cryptococcus neoformans var. neoformans serotype D (strain JEC21 / ATCC MYA-565) (Filobasidiella neoformans), this protein is Endopolyphosphatase (PPN1).